A 941-amino-acid polypeptide reads, in one-letter code: Isoleucine--tRNA ligase (941 aa).

The 'HIGH' region motif lies at 69–79; that stretch reads PYANGDIHIGH. E589 serves as a coordination point for L-isoleucyl-5'-AMP. The 'KMSKS' region motif lies at 630 to 634; the sequence is KMSKS. K633 is a binding site for ATP. The Zn(2+) site is built by C915, C918, C932, and C935.

Belongs to the class-I aminoacyl-tRNA synthetase family. IleS type 1 subfamily. As to quaternary structure, monomer. Zn(2+) serves as cofactor.

Its subcellular location is the cytoplasm. The enzyme catalyses tRNA(Ile) + L-isoleucine + ATP = L-isoleucyl-tRNA(Ile) + AMP + diphosphate. In terms of biological role, catalyzes the attachment of isoleucine to tRNA(Ile). As IleRS can inadvertently accommodate and process structurally similar amino acids such as valine, to avoid such errors it has two additional distinct tRNA(Ile)-dependent editing activities. One activity is designated as 'pretransfer' editing and involves the hydrolysis of activated Val-AMP. The other activity is designated 'posttransfer' editing and involves deacylation of mischarged Val-tRNA(Ile). The protein is Isoleucine--tRNA ligase of Zymomonas mobilis subsp. mobilis (strain ATCC 31821 / ZM4 / CP4).